The chain runs to 626 residues: Putative Xaa-Pro dipeptidyl-peptidase (626 aa).

Residues S231, D348, and H379 each act as charge relay system in the active site.

This sequence belongs to the peptidase S15 family.

It carries out the reaction Hydrolyzes Xaa-Pro-|- bonds to release unblocked, N-terminal dipeptides from substrates including Ala-Pro-|-p-nitroanilide and (sequentially) Tyr-Pro-|-Phe-Pro-|-Gly-Pro-|-Ile.. The chain is Putative Xaa-Pro dipeptidyl-peptidase from Rhodopirellula baltica (strain DSM 10527 / NCIMB 13988 / SH1).